Consider the following 184-residue polypeptide: Peptidyl-tRNA hydrolase (184 aa).

Tyr14 serves as a coordination point for tRNA. Residue His19 is the Proton acceptor of the active site. TRNA is bound by residues Phe64, Asn66, and Asn112.

It belongs to the PTH family. In terms of assembly, monomer.

It localises to the cytoplasm. The catalysed reaction is an N-acyl-L-alpha-aminoacyl-tRNA + H2O = an N-acyl-L-amino acid + a tRNA + H(+). Functionally, hydrolyzes ribosome-free peptidyl-tRNAs (with 1 or more amino acids incorporated), which drop off the ribosome during protein synthesis, or as a result of ribosome stalling. Catalyzes the release of premature peptidyl moieties from peptidyl-tRNA molecules trapped in stalled 50S ribosomal subunits, and thus maintains levels of free tRNAs and 50S ribosomes. This is Peptidyl-tRNA hydrolase from Thermoanaerobacter sp. (strain X514).